A 271-amino-acid chain; its full sequence is Glutamate racemase (271 aa).

Substrate-binding positions include 9-10 (DS) and 41-42 (YG). The active-site Proton donor/acceptor is C72. 73–74 (NT) provides a ligand contact to substrate. C183 serves as the catalytic Proton donor/acceptor. 184-185 (TH) is a substrate binding site.

Belongs to the aspartate/glutamate racemases family.

The catalysed reaction is L-glutamate = D-glutamate. It participates in cell wall biogenesis; peptidoglycan biosynthesis. Functionally, provides the (R)-glutamate required for cell wall biosynthesis. The protein is Glutamate racemase of Exiguobacterium sibiricum (strain DSM 17290 / CCUG 55495 / CIP 109462 / JCM 13490 / 255-15).